The primary structure comprises 116 residues: Protein Rev (116 aa).

A Phosphoserine; by host CK2 modification is found at serine 5. Residues 18–26 (IIKILYQSN) are homomultimerization. A disordered region spans residues 26–48 (NPYSKPNGSRQARRNRRRRWRAR). The short motif at 34-50 (SRQARRNRRRRWRARQN) is the Nuclear localization signal and RNA-binding (RRE) element. Basic residues predominate over residues 36-47 (QARRNRRRRWRA). The Nuclear export signal and binding to XPO1 signature appears at 73 to 84 (LQLPPIERLRLD). Phosphoserine; by host is present on serine 92.

This sequence belongs to the HIV-1 REV protein family. In terms of assembly, homomultimer; when bound to the RRE. Multimeric assembly is essential for activity and may involve XPO1. Binds to human KPNB1, XPO1, TNPO1, RANBP5 and IPO7. Interacts with the viral Integrase. Interacts with human KHDRBS1. Interacts with human NAP1; this interaction decreases Rev multimerization and stimulates its activity. Interacts with human DEAD-box helicases DDX3 and DDX24; these interactions may serve for viral RNA export to the cytoplasm and packaging, respectively. Interacts with human PSIP1; this interaction may inhibit HIV-1 DNA integration by promoting dissociation of the Integrase-LEDGF/p75 complex. Asymmetrically arginine dimethylated at one site by host PRMT6. Methylation impairs the RNA-binding activity and export of viral RNA from the nucleus to the cytoplasm. In terms of processing, phosphorylated by protein kinase CK2. Presence of, and maybe binding to the N-terminus of the regulatory beta subunit of CK2 is necessary for CK2-mediated Rev's phosphorylation.

The protein resides in the host nucleus. It is found in the host nucleolus. The protein localises to the host cytoplasm. Escorts unspliced or incompletely spliced viral pre-mRNAs (late transcripts) out of the nucleus of infected cells. These pre-mRNAs carry a recognition sequence called Rev responsive element (RRE) located in the env gene, that is not present in fully spliced viral mRNAs (early transcripts). This function is essential since most viral proteins are translated from unspliced or partially spliced pre-mRNAs which cannot exit the nucleus by the pathway used by fully processed cellular mRNAs. Rev itself is translated from a fully spliced mRNA that readily exits the nucleus. Rev's nuclear localization signal (NLS) binds directly to KPNB1/Importin beta-1 without previous binding to KPNA1/Importin alpha-1. KPNB1 binds to the GDP bound form of RAN (Ran-GDP) and targets Rev to the nucleus. In the nucleus, the conversion from Ran-GDP to Ran-GTP dissociates Rev from KPNB1 and allows Rev's binding to the RRE in viral pre-mRNAs. Rev multimerization on the RRE via cooperative assembly exposes its nuclear export signal (NES) to the surface. Rev can then form a complex with XPO1/CRM1 and Ran-GTP, leading to nuclear export of the complex. Conversion from Ran-GTP to Ran-GDP mediates dissociation of the Rev/RRE/XPO1/RAN complex, so that Rev can return to the nucleus for a subsequent round of export. Beside KPNB1, also seems to interact with TNPO1/Transportin-1, RANBP5/IPO5 and IPO7/RANBP7 for nuclear import. The nucleoporin-like HRB/RIP is an essential cofactor that probably indirectly interacts with Rev to release HIV RNAs from the perinuclear region to the cytoplasm. This chain is Protein Rev, found in Homo sapiens (Human).